The sequence spans 282 residues: Aldo-keto reductase MUL_1987 (282 aa).

Tyr57 serves as the catalytic Proton donor. Positions 197, 235, 238, 246, 247, and 273 each coordinate NADPH.

This sequence belongs to the aldo/keto reductase family.

The chain is Aldo-keto reductase MUL_1987 from Mycobacterium ulcerans (strain Agy99).